Reading from the N-terminus, the 379-residue chain is GDSL esterase/lipase EXL2 (379 aa).

The N-terminal stretch at 1 to 35 is a signal peptide; sequence MKRNSINIHHVTSFSSSPFWCVFFLVLLCKTSTNA. Residue Asn42 is glycosylated (N-linked (GlcNAc...) asparagine). Residue Ser54 is the Nucleophile of the active site. Catalysis depends on residues Asp358 and His361.

This sequence belongs to the 'GDSL' lipolytic enzyme family.

The protein resides in the secreted. In Arabidopsis thaliana (Mouse-ear cress), this protein is GDSL esterase/lipase EXL2 (EXL2).